A 286-amino-acid polypeptide reads, in one-letter code: Homoserine kinase (286 aa).

78–88 (PLARGLGSSSS) provides a ligand contact to ATP.

It belongs to the GHMP kinase family. Homoserine kinase subfamily.

It is found in the cytoplasm. It carries out the reaction L-homoserine + ATP = O-phospho-L-homoserine + ADP + H(+). Its pathway is amino-acid biosynthesis; L-threonine biosynthesis; L-threonine from L-aspartate: step 4/5. Its function is as follows. Catalyzes the ATP-dependent phosphorylation of L-homoserine to L-homoserine phosphate. The sequence is that of Homoserine kinase from Streptococcus equi subsp. equi (strain 4047).